The primary structure comprises 1276 residues: MVRLREIPRTATFAWSPGAASPLIATGTRAGAVDVDFSNETCLELWDLGLSNDDASQELQPIAKIGTDSGFNDLAWTDSQDNSRGVIAGALENGSLDLWDADKLINGSSDAIISRMTKHSGAIKALQFNPKHSNLLATGGAKGELYISDLNNIANPYRLGSTAARADDIECLDWNKKVAHILVTGSSAGFVTVWDVKTKKESLTLNNMGRKAVSAVAWDPEKPTKLITSTPLESDPLIYVWDLRNSHAPERTLKGHESGVLSLSWCPQDPDLLLSSGKDNRTICWNPQSGQAYGEFPVVTNWTFQTRWNPHNPNFFATASFDGRISIQTIQNTRTDTAQAIADQNQSLDGEDFFAKAQTQPQVSNFSLPKAPKWLERPSSATFGFGGRVVSVGLIEKGKRASRIKITPFEVDEAVAKSTETFETALKEGDLRSICETRASQAASEEEKADWKVIEALISGNPRKGLIEYLGFQDQADEAADKLAKLGLDKEDVNGDTLTESRGSGAKKHKRLQSMFDANPEADSFLSDLAASKGAKTNNPFHIFTGSESEAEQGITRALLLGNFEKALDVALKEDRMSDAFVIAICGGQKCIEKAQEHYFSKQTGGPNYTRLLASIVGKNLWDVVYNADLSNWKEVMAALCTFADDKEFADLCEALGDRLGEQIRSTDDKALRKDASFCFLAGSKLEKVVAMWIEELRENEQKGIETAADDTSFSIHVRALQGLIEKVTIFRQATNFQDTERTKEADWKLAMLYDKYIEYADVVATHGRLQVAQKYLDLVPEKHPEAEIARNRIKLAMRQAAPQRTQSTVPAARTTLNRPLPQINAYPPQPTFSSPAPPAPQNPYAPPTAAPSQPANPYAPPAAAPSQPSNPYAPPTAAAAIPQPQVNNPYAPIGGGGYTPAGYQPPQAPAYGVQSLGGGSVPPPPRASNQSPAVTTYTTATNLPAWNDLPEGFTKPPTSRRGTPATAAAAISSPFPNQSPTFSQGPPPPGMPPTQRAPSVPPPPKGTVPPPRVTSPPTGFTPASNLSAPPPAANPYASLPQSPPIGSTMGIPAPASIPRGPSPYNAAPTMPPPSNRYAPSPAVQAASPQLATRAAVPPPPPAAASPYAPQPAAQPPVASSYAPSTPPPSQLPMQQGPPQGPPSRPGTASSQRKAAPAPPKYPPGDRSHIPADAMPIFEILSADMQRVKTRAPSSFKAQVDDAERRLNILFDHLNNEDLLRPNTIADMAELARAIQARDYETAKTIHIDIMTNRTDECGNWMVGVKRLISMSRATP.

WD repeat units follow at residues 5–47 (REIP…ELWD), 66–109 (GTDS…NGSS), 118–158 (KHSG…NPYR), 164–204 (ARAD…ESLT), 208–251 (MGRK…APER), 255–295 (GHES…AYGE), and 298–338 (VVTN…TDTA). A WD 8; interaction with sec13 repeat occupies 382 to 407 (TFGFGGRVVSVGLIEKGKRASRIKIT). Disordered stretches follow at residues 820–885 (PLPQ…IPQP) and 906–1171 (PPQA…SHIP). The segment covering 828–850 (PPQPTFSSPAPPAPQNPYAPPTA) has biased composition (pro residues). Low complexity predominate over residues 865–885 (APSQPSNPYAPPTAAAAIPQP). Residues 928–945 (ASNQSPAVTTYTTATNLP) show a composition bias toward polar residues. The segment covering 957–985 (PPTSRRGTPATAAAAISSPFPNQSPTFSQ) has biased composition (low complexity). The segment covering 1000-1015 (SVPPPPKGTVPPPRVT) has biased composition (pro residues). Low complexity-rich tracts occupy residues 1016 to 1028 (SPPT…SNLS) and 1079 to 1096 (APSP…TRAA). Residues 1097–1115 (VPPPPPAAASPYAPQPAAQ) show a composition bias toward pro residues.

It belongs to the WD repeat SEC31 family. In terms of assembly, the COPII coat is composed of at least 5 proteins: the sec23/24 complex, the sec13/31 complex, and the protein sar1. sec13 and sec31 make a 2:2 tetramer that forms the edge element of the COPII outer coat. The tetramer self-assembles in multiple copies to form the complete polyhedral cage. Interacts (via WD 8) with sec13.

It localises to the cytoplasmic vesicle. The protein resides in the COPII-coated vesicle membrane. Its subcellular location is the endoplasmic reticulum membrane. Functionally, component of the coat protein complex II (COPII) which promotes the formation of transport vesicles from the endoplasmic reticulum (ER). The coat has two main functions, the physical deformation of the endoplasmic reticulum membrane into vesicles and the selection of cargo molecules. This Aspergillus clavatus (strain ATCC 1007 / CBS 513.65 / DSM 816 / NCTC 3887 / NRRL 1 / QM 1276 / 107) protein is Protein transport protein sec31 (sec31).